A 452-amino-acid polypeptide reads, in one-letter code: Pup--protein ligase (452 aa).

Residue E9 participates in Mg(2+) binding. R53 provides a ligand contact to ATP. Y55 provides a ligand contact to Mg(2+). The active-site Proton acceptor is D57. E63 provides a ligand contact to Mg(2+). 2 residues coordinate ATP: T66 and W419.

The protein belongs to the Pup ligase/Pup deamidase family. Pup-conjugating enzyme subfamily.

It catalyses the reaction ATP + [prokaryotic ubiquitin-like protein]-L-glutamate + [protein]-L-lysine = ADP + phosphate + N(6)-([prokaryotic ubiquitin-like protein]-gamma-L-glutamyl)-[protein]-L-lysine.. Its pathway is protein degradation; proteasomal Pup-dependent pathway. It participates in protein modification; protein pupylation. Catalyzes the covalent attachment of the prokaryotic ubiquitin-like protein modifier Pup to the proteasomal substrate proteins, thereby targeting them for proteasomal degradation. This tagging system is termed pupylation. The ligation reaction involves the side-chain carboxylate of the C-terminal glutamate of Pup and the side-chain amino group of a substrate lysine. This Salinispora arenicola (strain CNS-205) protein is Pup--protein ligase.